The following is a 254-amino-acid chain: Triosephosphate isomerase (254 aa).

A substrate-binding site is contributed by 10–12 (NWK). Histidine 99 serves as the catalytic Electrophile. Glutamate 169 functions as the Proton acceptor in the catalytic mechanism. Substrate contacts are provided by residues glycine 175, serine 215, and 236 to 237 (GG).

It belongs to the triosephosphate isomerase family. As to quaternary structure, homodimer.

It is found in the cytoplasm. The enzyme catalyses D-glyceraldehyde 3-phosphate = dihydroxyacetone phosphate. It functions in the pathway carbohydrate biosynthesis; gluconeogenesis. The protein operates within carbohydrate degradation; glycolysis; D-glyceraldehyde 3-phosphate from glycerone phosphate: step 1/1. Its function is as follows. Involved in the gluconeogenesis. Catalyzes stereospecifically the conversion of dihydroxyacetone phosphate (DHAP) to D-glyceraldehyde-3-phosphate (G3P). The sequence is that of Triosephosphate isomerase from Chlamydia caviae (strain ATCC VR-813 / DSM 19441 / 03DC25 / GPIC) (Chlamydophila caviae).